A 313-amino-acid polypeptide reads, in one-letter code: Serine/threonine-protein phosphatase PP2A-3 catalytic subunit (313 aa).

Mn(2+)-binding residues include Asp-61, His-63, Asp-89, and Asn-121. Residue His-122 is the Proton donor of the active site. The Mn(2+) site is built by His-171 and His-245. A Leucine methyl ester modification is found at Leu-313.

This sequence belongs to the PPP phosphatase family. PP-2A subfamily. As to quaternary structure, PP2A consists of a common heterodimeric core enzyme, composed of a 36 kDa catalytic subunit (subunit C) and a 65 kDa constant regulatory subunit (subunit A), that associates with a variety of regulatory subunits such as subunits B (the R2/B/PR55/B55, R3/B''/PR72/PR130/PR59 and R5/B'/B56 families). Interacts with ACR4. Interacts with TAP46. Interacts with SIC/RON3. It depends on Mn(2+) as a cofactor. Reversibly methyl esterified on Leu-313 by leucine carboxyl methyltransferase 1 (LCMT1) and pectin methylesterase 1 (PME1). Carboxyl methylation influences the affinity of the catalytic subunit for the different regulatory subunits, thereby modulating the PP2A holoenzyme's substrate specificity, enzyme activity and cellular localization. In terms of processing, phosphorylation of either threonine (by autophosphorylation-activated protein kinase) or tyrosine results in inactivation of the phosphatase. Auto-dephosphorylation has been suggested as a mechanism for reactivation.

Its subcellular location is the cytoplasm. It carries out the reaction O-phospho-L-seryl-[protein] + H2O = L-seryl-[protein] + phosphate. It catalyses the reaction O-phospho-L-threonyl-[protein] + H2O = L-threonyl-[protein] + phosphate. In terms of biological role, functions redundantly with PP2A4, and is involved in establishing auxin gradients, apical-basal axis of polarity and root and shoot apical meristem during embryogenesis. May dephosphorylate PIN1 and regulate its subcellular distribution for polar auxin transport. Involved in the regulation of formative cell division in roots by dephosphorylating ACR4 protein kinase. This Arabidopsis thaliana (Mouse-ear cress) protein is Serine/threonine-protein phosphatase PP2A-3 catalytic subunit.